The primary structure comprises 481 residues: Phosphoglucosamine mutase (481 aa).

S129 (phosphoserine intermediate) is an active-site residue. Mg(2+)-binding residues include S129, D271, D273, and D275. S129 is modified (phosphoserine).

The protein belongs to the phosphohexose mutase family. The cofactor is Mg(2+). Post-translationally, activated by phosphorylation.

The catalysed reaction is alpha-D-glucosamine 1-phosphate = D-glucosamine 6-phosphate. Catalyzes the conversion of glucosamine-6-phosphate to glucosamine-1-phosphate. The chain is Phosphoglucosamine mutase from Picosynechococcus sp. (strain ATCC 27264 / PCC 7002 / PR-6) (Agmenellum quadruplicatum).